The chain runs to 513 residues: DNA damage response protein kinase DUN1 (513 aa).

Positions 1 to 12 are enriched in basic and acidic residues; the sequence is MSLSTKREHSGD. Residues 1–29 are disordered; that stretch reads MSLSTKREHSGDVTDSSFKRQQRSNKPSS. Ser-10 carries the post-translational modification Phosphoserine. Positions 56–112 constitute an FHA domain; that stretch reads TTIGRSRSCDVILSEPDISTFHAEFHLLQMDVDNFQRNLINVIDKSRNGTFINGNRL. Residue Ser-139 is modified to Phosphoserine. The Protein kinase domain occupies 200 to 480; that stretch reads YLLGKELGAG…IDEALNHPWF (281 aa). Residues 206-214 and Lys-229 contribute to the ATP site; that span reads LGAGHYALV. The active-site Proton acceptor is the Asp-328. At Thr-380 the chain carries Phosphothreonine.

This sequence belongs to the protein kinase superfamily. CAMK Ser/Thr protein kinase family. CHEK2 subfamily. Interacts with the PAB-dependent poly(A)-nuclease (PAN) complex regulatory subunit PAN3 via its forkhead-associated (FHA) domain. Post-translationally, autophosphorylation increases in response to DNA damage.

Its subcellular location is the nucleus. It catalyses the reaction L-seryl-[protein] + ATP = O-phospho-L-seryl-[protein] + ADP + H(+). The enzyme catalyses L-threonyl-[protein] + ATP = O-phospho-L-threonyl-[protein] + ADP + H(+). Transducer of the DNA damage signal. Phosphorylates SML1 on serine residues. Cooperates with the PAN deadenylation complex in the regulation of RAD5 mRNA levels and cell survival in response to replicational stress. This Saccharomyces cerevisiae (strain ATCC 204508 / S288c) (Baker's yeast) protein is DNA damage response protein kinase DUN1 (DUN1).